The chain runs to 595 residues: Grainyhead-like protein 3 homolog (595 aa).

The transcription activation stretch occupies residues 29–92; the sequence is DAWSKYLENP…CDQVKRSCSE (64 aa). The region spanning 221 to 454 is the Grh/CP2 DB domain; it reads ANRDFEYTLE…DMETHPVLFI (234 aa). Residues 484-505 are disordered; it reads SSQSFPKGLEAPPSKQQTSEDS.

This sequence belongs to the grh/CP2 family. Grainyhead subfamily.

The protein localises to the nucleus. In terms of biological role, transcription factor playing important roles in primary neurulation and in the differentiation of stratified epithelia of both ectodermal and endodermal origin. Binds directly to the consensus DNA sequence 5'-AACCGGTT-3' acting as an activator and repressor on distinct target genes. The chain is Grainyhead-like protein 3 homolog (grhl3) from Xenopus laevis (African clawed frog).